Here is a 528-residue protein sequence, read N- to C-terminus: Cytochrome P450 monooxygenase vrcB (528 aa).

A helical membrane pass occupies residues 5 to 27 (YGLFFAAVALYSVALVIYRLYLH). Heme is bound at residue Cys470.

It belongs to the cytochrome P450 family. Requires heme as cofactor.

It localises to the membrane. The catalysed reaction is variecoladiene + 4 reduced [NADPH--hemoprotein reductase] + 4 O2 = variecolin + 4 oxidized [NADPH--hemoprotein reductase] + 6 H2O + 4 H(+). It functions in the pathway secondary metabolite biosynthesis; terpenoid biosynthesis. Cytochrome P450 monooxygenase; part of the gene cluster that mediates the biosynthesis of the sesterterpene variecolin. The first step in the pathway is performed by the variecoladiene synthase vrcA that possesses both prenyl transferase and terpene cyclase activity, converting isopentenyl diphosphate and dimethylallyl diphosphate into geranylfarnesyl pyrophosphate (GFPP) and then converting GFPP into the tetracyclic variecoladiene. The cytochrome P450 monooxygenase vrcB then catalyzes multiple oxidations at C-5 and C-20 positions to yield variecolin. The chain is Cytochrome P450 monooxygenase vrcB from Aspergillus aculeatus (strain ATCC 16872 / CBS 172.66 / WB 5094).